The primary structure comprises 130 residues: Small ribosomal subunit protein uS11 (130 aa).

It belongs to the universal ribosomal protein uS11 family. As to quaternary structure, part of the 30S ribosomal subunit. Interacts with proteins S7 and S18. Binds to IF-3.

Its function is as follows. Located on the platform of the 30S subunit, it bridges several disparate RNA helices of the 16S rRNA. Forms part of the Shine-Dalgarno cleft in the 70S ribosome. This chain is Small ribosomal subunit protein uS11, found in Synechococcus sp. (strain CC9605).